The sequence spans 528 residues: Linear element-associated protein hop1 (528 aa).

One can recognise an HORMA domain in the interval 11–212 (TKSDFTLKNL…RGEFKDIVSF (202 aa)). A PHD-type zinc finger spans residues 334-385 (LLNCECGDSTEDSEMFQCERCDGWVHCACYGFESDSDPRQPNQLLCYTCLLV). Residues cysteine 337, cysteine 339, cysteine 351, cysteine 354, histidine 359, cysteine 362, cysteine 379, and cysteine 382 each contribute to the Zn(2+) site. The tract at residues 507-528 (RPKKVSKTSNTKETDTMKPLRI) is disordered. A compositionally biased stretch (basic and acidic residues) spans 516–528 (NTKETDTMKPLRI).

Interacts (via N-terminus) with rec10; the interaction is direct. Interacts (via C-terminus) with rec15 (via C-terminus); the interaction is direct.

It is found in the nucleus. The protein resides in the chromosome. Functionally, facilitates initiation of meiotic recombination and DNA double-strand break (DSB) formation at DSB hotspot sites by enhancing the interaction between rec10 and rec15. The polypeptide is Linear element-associated protein hop1 (Schizosaccharomyces pombe (strain 972 / ATCC 24843) (Fission yeast)).